A 285-amino-acid polypeptide reads, in one-letter code: Methanethiol S-methyltransferase 1 (285 aa).

5 consecutive transmembrane segments (helical) span residues A55–V75, A88–M108, L132–I152, V162–I182, and F224–V244.

The protein belongs to the nurim family.

The protein localises to the membrane. The catalysed reaction is methanethiol + S-adenosyl-L-methionine = dimethyl sulfide + S-adenosyl-L-homocysteine + H(+). Its function is as follows. Catalyzes the methylation of methanethiol (MeSH) to yield dimethylsulphide (DMS). The sequence is that of Methanethiol S-methyltransferase 1 from Bradyrhizobium diazoefficiens (strain JCM 10833 / BCRC 13528 / IAM 13628 / NBRC 14792 / USDA 110).